The sequence spans 144 residues: L-fucose mutarotase (144 aa).

The active-site Proton donor is H22. Substrate-binding positions include D30, R109, and 131–133 (YGN).

The protein belongs to the RbsD / FucU family. FucU mutarotase subfamily. Homodecamer.

It is found in the cytoplasm. The catalysed reaction is alpha-L-fucose = beta-L-fucose. It participates in carbohydrate metabolism; L-fucose metabolism. Its function is as follows. Involved in the anomeric conversion of L-fucose. The protein is L-fucose mutarotase of Histophilus somni (strain 2336) (Haemophilus somnus).